We begin with the raw amino-acid sequence, 186 residues long: UPF0301 protein HI_0304 (186 aa).

The protein belongs to the UPF0301 (AlgH) family.

The polypeptide is UPF0301 protein HI_0304 (Haemophilus influenzae (strain ATCC 51907 / DSM 11121 / KW20 / Rd)).